The chain runs to 108 residues: NADH dehydrogenase [ubiquinone] flavoprotein 3, mitochondrial (108 aa).

The N-terminal 34 residues, 1 to 34 (MAASCLLRQGRAGALKTMLQEAQVFRGLASTVSL), are a transit peptide targeting the mitochondrion. Residues 33-72 (SLSAESGKSEKGQPQNSKKQSPPKKPAPVPAEPFDNSTYK) form a disordered region. Ser-105 bears the Phosphoserine mark.

Belongs to the complex I NDUFV3 subunit family. As to quaternary structure, complex I is composed of 45 different subunits. This is a component of the flavoprotein-sulfur (FP) fragment of the enzyme.

It localises to the mitochondrion inner membrane. Its function is as follows. Accessory subunit of the mitochondrial membrane respiratory chain NADH dehydrogenase (Complex I), that is believed not to be involved in catalysis. Complex I functions in the transfer of electrons from NADH to the respiratory chain. The immediate electron acceptor for the enzyme is believed to be ubiquinone. May be the terminally assembled subunit of Complex I. In Gorilla gorilla gorilla (Western lowland gorilla), this protein is NADH dehydrogenase [ubiquinone] flavoprotein 3, mitochondrial (NDUFV3).